The primary structure comprises 161 residues: Protein-export protein SecB (161 aa).

The segment at 141-161 (KKQQETAGEQPDQPADTITRH) is disordered.

The protein belongs to the SecB family. As to quaternary structure, homotetramer, a dimer of dimers. One homotetramer interacts with 1 SecA dimer.

It localises to the cytoplasm. In terms of biological role, one of the proteins required for the normal export of preproteins out of the cell cytoplasm. It is a molecular chaperone that binds to a subset of precursor proteins, maintaining them in a translocation-competent state. It also specifically binds to its receptor SecA. This chain is Protein-export protein SecB, found in Nitrosomonas europaea (strain ATCC 19718 / CIP 103999 / KCTC 2705 / NBRC 14298).